A 70-amino-acid polypeptide reads, in one-letter code: Palustrin-2ISa (70 aa).

The first 22 residues, 1-22, serve as a signal peptide directing secretion; the sequence is MFTLKKSLLLLFFLGTISLSLC. The propeptide at 23–39 is removed in mature form; sequence EQERSAEDEGEVIEEEV. A disulfide bond links cysteine 64 and cysteine 70.

In terms of tissue distribution, expressed by the skin glands.

The protein resides in the secreted. In terms of biological role, has antimicrobial activity against Gram-negative bacterium E.coli ATCC 8739 (MIC=100 ug), against Gram positive bacteria S.aureus ATCC 6538 (MIC=25 ug), methicillin-resistant S.aureus ATCC 43300 (MIC=100 ug), B.subtilis ATCC 6633 (MIC=12.5 ug) and against fungus C.albicans ATCC 90028 (MIC=100 ug). The chain is Palustrin-2ISa from Odorrana ishikawae (Ishikawa's frog).